Here is an 87-residue protein sequence, read N- to C-terminus: MTGKAPFFVILIAALLLLSSFFFGEVKAISTKQPKHRKLGNREGDENRSNEIVVQMKARVKRSKSKRGPQKKEPYKKPPCSPPTHPA.

The signal sequence occupies residues 1 to 28 (MTGKAPFFVILIAALLLLSSFFFGEVKA). Residues 32 to 87 (KQPKHRKLGNREGDENRSNEIVVQMKARVKRSKSKRGPQKKEPYKKPPCSPPTHPA) form a disordered region. Basic and acidic residues predominate over residues 40–49 (GNREGDENRS). Positions 51–71 (EIVVQMKARVKRSKSKRGPQK) match the SCOOP motif motif. Positions 58 to 69 (ARVKRSKSKRGP) are enriched in basic residues. Positions 63–65 (SKS) match the SxS motif essential for MIK2 binding motif. Residues 77–87 (KPPCSPPTHPA) are compositionally biased toward pro residues.

It belongs to the serine rich endogenous peptide (SCOOP) phytocytokine family. As to quaternary structure, interacts with MIK2 (via extracellular leucine-rich repeat domain); this interaction triggers the formation of complex between MIK2 and the BAK1/SERK3 and SERK4 coreceptors, and subsequent BAK1 activation by phosphorylation.

The protein resides in the cell membrane. It is found in the secreted. Its subcellular location is the extracellular space. It localises to the apoplast. Brassicaceae-specific phytocytokine (plant endogenous peptide released into the apoplast) perceived by MIK2 in a BAK1/SERK3 and SERK4 coreceptors-dependent manner, that modulates various physiological and antimicrobial processes including growth prevention and reactive oxygen species (ROS) response regulation. This chain is Serine rich endogenous peptide 17, found in Arabidopsis thaliana (Mouse-ear cress).